We begin with the raw amino-acid sequence, 759 residues long: Serine/threonine-protein kinase HRK1 (759 aa).

Positions 1-32 (MPNLLSRNPFHGHHNDHHHDRENSSNNPPQLI) are disordered. Residue S37 is modified to Phosphoserine. The segment at 45 to 162 (KQSNDSLRSE…PPPSKSTSTV (118 aa)) is disordered. Positions 59–97 (SMKSTTTTTNYTTTNLNNNTHSHSNATSISTNNYNNNYE) are enriched in low complexity. Residues 113-122 (SPASPKQTHS) are compositionally biased toward polar residues. One can recognise a Protein kinase domain in the interval 215-722 (GKLGKLLGSG…LDDIFNDEWF (508 aa)). Residues 221 to 229 (LGSGAGGSV) and K244 each bind ATP. D340 (proton acceptor) is an active-site residue. Residues S382 and S472 each carry the phosphoserine modification. Over residues 493-502 (PNTPASIQGK) the composition is skewed to polar residues. 2 disordered regions span residues 493–578 (PNTP…GRVD) and 614–682 (AANA…KIIH). T495 bears the Phosphothreonine mark. S498 carries the post-translational modification Phosphoserine. The span at 510 to 519 (VEEETEENKE) shows a compositional bias: acidic residues. Residues 520 to 547 (DDSNNDKESTPDNDKESTIDIKISKNEN) are compositionally biased toward basic and acidic residues. Over residues 614-646 (AANANPDMVPQNNPQQQQQQQQQQQQQQQQQQQ) the composition is skewed to low complexity. The segment covering 663–672 (ASDNKSSQQH) has biased composition (polar residues).

The protein belongs to the protein kinase superfamily. Ser/Thr protein kinase family.

Its subcellular location is the cytoplasm. It carries out the reaction L-seryl-[protein] + ATP = O-phospho-L-seryl-[protein] + ADP + H(+). The enzyme catalyses L-threonyl-[protein] + ATP = O-phospho-L-threonyl-[protein] + ADP + H(+). Functionally, involved in regulating the activity of the plasma membrane proton pump PMA1. This is Serine/threonine-protein kinase HRK1 (HRK1) from Saccharomyces cerevisiae (strain ATCC 204508 / S288c) (Baker's yeast).